The chain runs to 289 residues: Phosphoribulokinase (289 aa).

12–20 provides a ligand contact to ATP; that stretch reads GSSGAGTTT.

Belongs to the phosphoribulokinase family.

It catalyses the reaction D-ribulose 5-phosphate + ATP = D-ribulose 1,5-bisphosphate + ADP + H(+). Its pathway is carbohydrate biosynthesis; Calvin cycle. The polypeptide is Phosphoribulokinase (cbbP) (Rhizobium meliloti (strain 1021) (Ensifer meliloti)).